The following is a 580-amino-acid chain: Keratin, type II cytoskeletal 5 (580 aa).

Residues 1–161 (MSRQSSVSFR…DPTIQRVRTE (161 aa)) are head. Residues serine 5, serine 8, serine 16, and serine 21 each carry the phosphoserine modification. Position 24 is a phosphothreonine; by CDK1 (threonine 24). A phosphoserine mark is found at serine 26, serine 36, serine 47, serine 61, serine 68, serine 72, serine 75, and serine 79. A Phosphothreonine; by CDK1 modification is found at threonine 145. Threonine 160 is subject to Phosphothreonine; by AURKB. The interval 162 to 197 (EREQIKTLNNKFASFIDKVRFLEQQNKVLDTKWALL) is coil 1A. An IF rod domain is found at 162-475 (EREQIKTLNN…KLLEGEECRL (314 aa)). The tract at residues 198-216 (QEQGTKTIKQNLDPLFEQY) is linker 1. The coil 1B stretch occupies residues 217–309 (INNLRRQLDG…FFDAELSQMQ (93 aa)). Positions 310-332 (THVSDTSVVLSMDNNRSLDLDSI) are linker 12. The coil 2 stretch occupies residues 333–471 (IAEVKAQYED…ATYRKLLEGE (139 aa)). Residues 472–580 (ECRLSGEGVG…TSSSRRSFKS (109 aa)) form a tail region. The residue at position 526 (arginine 526) is an Omega-N-methylarginine. Positions 555–580 (FGSGGGSGSSVKFVSTTSSSRRSFKS) are disordered. Over residues 563–580 (SSVKFVSTTSSSRRSFKS) the composition is skewed to low complexity.

This sequence belongs to the intermediate filament family. In terms of assembly, heterodimer of a type I and a type II keratin. Heterodimer with type I keratin KRT25 leading to the formation of keratin intermediate filament (KIF) network. Forms a heterodimer (via 2B domains) with KRT14 (via 2B domains). Interacts with PLEC isoform 1C, when in a heterodimer with KRT14. Interacts with TCHP. Interacts with EPPK1. Interacts with AMELX. Interacts with PKP1 (via N-terminus) and PKP2. In terms of processing, phosphorylated by CDK1, AURKB and Rho-kinase, phosphorylation is regulated by the cell cycle. Thr-24 phosphorylation, mediated by CDK1, peaks during prometaphase or metaphase cells with phosphorylated filamentous structures evident throughout the cytoplasm during early mitosis. CDK1 phosphorylates Thr-24 in mitotic cells at the site of injury. Post-translationally, O-glycosylated. As to expression, expressed in the corneal epithelium (at protein level). Expressed in the epidermis of the ear (at protein level). Expressed in the basal and spinous layers of the skin at birth (at protein level).

It is found in the cytoplasm. In terms of biological role, required for the formation of keratin intermediate filaments in the basal epidermis and maintenance of the skin barrier in response to mechanical stress. Regulates the recruitment of Langerhans cells to the epidermis, potentially by modulation of the abundance of macrophage chemotactic cytokines, macrophage inflammatory cytokines and CTNND1 localization in keratinocytes. The sequence is that of Keratin, type II cytoskeletal 5 from Mus musculus (Mouse).